A 233-amino-acid polypeptide reads, in one-letter code: Cytidylate kinase (233 aa).

Residue Gly-15–Thr-23 coordinates ATP. A compositionally biased stretch (basic and acidic residues) spans Arg-183–Asp-201. The interval Arg-183–Ala-202 is disordered.

Belongs to the cytidylate kinase family. Type 1 subfamily.

The protein localises to the cytoplasm. The enzyme catalyses CMP + ATP = CDP + ADP. It carries out the reaction dCMP + ATP = dCDP + ADP. The chain is Cytidylate kinase from Geobacter sulfurreducens (strain ATCC 51573 / DSM 12127 / PCA).